A 737-amino-acid chain; its full sequence is Protein penguin (737 aa).

Positions 1-128 are disordered; that stretch reads MVSSEPKGPA…EKKDLKLKRK (128 aa). 2 stretches are compositionally biased toward basic and acidic residues: residues 76-89 and 107-122; these read KKFD…DKRL and EGEK…EKKD. The PUM-HD domain occupies 139-490; the sequence is EANQIHEKLR…EILEQIEAPI (352 aa). Pumilio repeat units follow at residues 167–202, 203–238, 239–274, 388–425, and 426–462; these read NVGD…EISE, KLLP…KLVD, SLYG…YMRQ, NIKE…AIYD, and HLHG…EFIR. Positions 577 to 638 are disordered; sequence VESSSDDEDE…EEEPAAPLVS (62 aa). Over residues 580–600 the composition is skewed to acidic residues; it reads SSDDEDEDEDEDEESDDEGDE. A compositionally biased stretch (basic and acidic residues) spans 601 to 615; the sequence is KEQKEAAADDAEPKV. The segment covering 616–626 has biased composition (basic residues); it reads KKAKKEPKKPK.

The sequence is that of Protein penguin from Drosophila melanogaster (Fruit fly).